The following is a 203-amino-acid chain: High frequency lysogenization protein HflD homolog (203 aa).

Belongs to the HflD family.

The protein resides in the cytoplasm. Its subcellular location is the cell inner membrane. This Dichelobacter nodosus (strain VCS1703A) protein is High frequency lysogenization protein HflD homolog.